The chain runs to 257 residues: Protein UL133 (257 aa).

Transmembrane regions (helical) follow at residues 14–34 (WGVP…IWCL) and 45–65 (PGIA…AYLI). The interval 149–232 (PTVFVPPPSE…AMPQMPPGVA (84 aa)) is disordered. Positions 164–175 (VIPPQPPTPTSE) are enriched in pro residues. The span at 179 to 193 (KKGRAKDKPKGRPKN) shows a compositional bias: basic residues. Residues 214–228 (GGPPDASPPAMPQMP) show a composition bias toward pro residues.

The protein resides in the host Golgi apparatus membrane. The chain is Protein UL133 (UL133) from Human cytomegalovirus (strain Merlin) (HHV-5).